Reading from the N-terminus, the 948-residue chain is Phosphatidylinositol-glycan-specific phospholipase D (948 aa).

Residues 1 to 24 (MKNKIILLWLLLIVILCTISNVKG) form the signal peptide. N39, N78, N148, N300, N433, N452, N506, and N535 each carry an N-linked (GlcNAc...) asparagine glycan. FG-GAP repeat units lie at residues 451–512 (TNFT…SVTI), 526–588 (QVAT…NPAG), 596–656 (LPSI…RISG), and 663–724 (DADY…LNSF). Residues N749 and N788 are each glycosylated (N-linked (GlcNAc...) asparagine). FG-GAP repeat units lie at residues 799-861 (NLLL…LTND) and 895-948 (SSGG…NIFQ).

The protein belongs to the GPLD1 family. Ca(2+) serves as cofactor.

Its subcellular location is the secreted. The catalysed reaction is a 6-(alpha-D-glucosaminyl)-1-(1,2-diacyl-sn-glycero-3-phospho)-1D-myo-inositol + H2O = 6-(alpha-D-glucosaminyl)-1D-myo-inositol + a 1,2-diacyl-sn-glycero-3-phosphate + H(+). In terms of biological role, hydrolyzes the inositol phosphate linkage in proteins anchored by phosphatidylinositol glycans (GPI-anchor) thus releasing these proteins from the membrane. May also cleave GPI anchor intermediates intracellularly. In Dictyostelium discoideum (Social amoeba), this protein is Phosphatidylinositol-glycan-specific phospholipase D (pldG).